Reading from the N-terminus, the 118-residue chain is MEQQQQQQQQQQQLRNLRDFLLVYNRMTELCFQRCVPSLHHRALDAEEEACLHSCAGKLIHSNHRLMAAYVQLMPALVQRRMADYEAASAVPHATAEQLETSPSRSLPSGNLGKGGAG.

A Twin CX3C motif motif is present at residues 31–55 (CFQRCVPSLHHRALDAEEEACLHSC). Disulfide bonds link cysteine 31-cysteine 55 and cysteine 35-cysteine 51. A disordered region spans residues 89 to 118 (SAVPHATAEQLETSPSRSLPSGNLGKGGAG). The segment covering 98-109 (QLETSPSRSLPS) has biased composition (polar residues).

This sequence belongs to the small Tim family. In terms of assembly, component of the TIM22 complex, which core is composed of TIMM22, associated with TIMM10 (TIMM10A and/or TIMM10B), TIMM9, AGK and TIMM29.

The protein resides in the mitochondrion inner membrane. In terms of biological role, component of the TIM22 complex, a complex that mediates the import and insertion of multi-pass transmembrane proteins into the mitochondrial inner membrane. The TIM22 complex forms a twin-pore translocase that uses the membrane potential as the external driving force. In the TIM22 complex, it may act as a docking point for the soluble 70 kDa complex that guides the target proteins in transit through the aqueous mitochondrial intermembrane space. The chain is Mitochondrial import inner membrane translocase subunit Tim10 B (TIMM10B) from Bos taurus (Bovine).